The following is a 110-amino-acid chain: Parvalbumin alpha (110 aa).

Position 2 is an N-acetylserine (S2). 2 positions are modified to phosphoserine: S2 and S24. 2 consecutive EF-hand domains span residues 39-74 (KSPE…FSPD) and 78-110 (LSVK…VAES). Positions 52, 54, 56, 58, 60, 63, 91, 93, 95, 97, and 102 each coordinate Ca(2+).

The protein belongs to the parvalbumin family.

In terms of biological role, in muscle, parvalbumin is thought to be involved in relaxation after contraction. It binds two calcium ions. The chain is Parvalbumin alpha (PVALB) from Bos taurus (Bovine).